The chain runs to 350 residues: Outer membrane protein A (350 aa).

A signal peptide spans 1–21; the sequence is MKKTAIAIAVALAGFATVAQA. 8 beta stranded membrane passes run 27-37, 55-66, 70-78, 96-107, 112-120, 146-155, 160-167, and 186-194; these read TWYAGAKLGWS, QLGAGAFGGYQV, VGFEMGYDW, QGVQLTAKLGYP, LDVYTRLGG, PVFAGGIEYA, IATRLEYQ, and LLSVGVSYR. Repeat copies occupy residues 205-206, 207-208, 209-210, and 211-212. Residues 205–212 are 4 X 2 AA tandem repeats of A-P; sequence APAPAPAP. Positions 214-342 constitute an OmpA-like domain; that stretch reads VQTKHFTLKS…RVEIEVKGVK (129 aa). A disulfide bridge connects residues Cys-315 and Cys-327.

The protein belongs to the outer membrane OOP (TC 1.B.6) superfamily. OmpA family. In terms of assembly, monomer and homodimer.

It localises to the cell outer membrane. With TolR probably plays a role in maintaining the position of the peptidoglycan cell wall in the periplasm. Acts as a porin with low permeability that allows slow penetration of small solutes; an internal gate slows down solute passage. Functionally, required for conjugation with F-type plasmids; probably serves as the mating receptor on recipient cells. This Salmonella typhi protein is Outer membrane protein A.